A 312-amino-acid polypeptide reads, in one-letter code: Olfactory receptor 1D5 (312 aa).

The Extracellular segment spans residues 1 to 25 (MDGDNQSENSQFLLLGISESPEQQQ). Residue Asn5 is glycosylated (N-linked (GlcNAc...) asparagine). A helical transmembrane segment spans residues 26–49 (ILFWMFLSMYLVTVLGNVLIILAI). Residues 50-57 (SSDSRLHT) are Cytoplasmic-facing. Residues 58-79 (PMYFFLANLSFTDLFFVTNTIP) traverse the membrane as a helical segment. Over 80–100 (KMLVNLQSQNKAISYAGCLTQ) the chain is Extracellular. The cysteines at positions 97 and 189 are disulfide-linked. Residues 101–120 (LYFLVSLVTLDNLILAVMAY) form a helical membrane-spanning segment. Residues 121-140 (DRYVAICCPLHYVTAMSPGL) lie on the Cytoplasmic side of the membrane. Residues 141–158 (CVLLLSLCWGLSVFYGLL) traverse the membrane as a helical segment. At 159 to 196 (LTLLLTRVTFCGPREIHYLFCDMYILLRLACSNTHIIH) the chain is on the extracellular side. The helical transmembrane segment at 197–220 (TVLVATGCFIFLTPLGFMTTSYVR) threads the bilayer. Residues 221 to 237 (IVRTILQIPSASKKYKA) lie on the Cytoplasmic side of the membrane. The chain crosses the membrane as a helical span at residues 238–260 (FSTCASHLGVVSLFYGTLAMVYL). Residues 261 to 271 (QPLHTYSMKDS) lie on the Extracellular side of the membrane. A helical transmembrane segment spans residues 272-291 (VATVMYAVVTPMMNPFIHSL). Residues 292-312 (RNKDMHGALGRVLRRLFQRPK) are Cytoplasmic-facing.

Belongs to the G-protein coupled receptor 1 family.

The protein localises to the cell membrane. Odorant receptor. This Pan troglodytes (Chimpanzee) protein is Olfactory receptor 1D5 (OR1D5).